A 270-amino-acid chain; its full sequence is ATP synthase subunit a (270 aa).

Transmembrane regions (helical) follow at residues 38 to 58 (VHID…GIFY), 98 to 118 (IAPL…MDLV), 143 to 163 (DVNI…YYSI), 208 to 228 (LFGN…MLPW), and 239 to 259 (AIFH…LTIV).

This sequence belongs to the ATPase A chain family. As to quaternary structure, F-type ATPases have 2 components, CF(1) - the catalytic core - and CF(0) - the membrane proton channel. CF(1) has five subunits: alpha(3), beta(3), gamma(1), delta(1), epsilon(1). CF(0) has three main subunits: a(1), b(2) and c(9-12). The alpha and beta chains form an alternating ring which encloses part of the gamma chain. CF(1) is attached to CF(0) by a central stalk formed by the gamma and epsilon chains, while a peripheral stalk is formed by the delta and b chains.

It is found in the cell inner membrane. Its function is as follows. Key component of the proton channel; it plays a direct role in the translocation of protons across the membrane. This Vibrio parahaemolyticus serotype O3:K6 (strain RIMD 2210633) protein is ATP synthase subunit a.